The following is a 260-amino-acid chain: Ribosomal RNA small subunit methyltransferase J (260 aa).

S-adenosyl-L-methionine is bound by residues 125–126 (ER) and aspartate 179.

This sequence belongs to the methyltransferase superfamily. RsmJ family.

It localises to the cytoplasm. The catalysed reaction is guanosine(1516) in 16S rRNA + S-adenosyl-L-methionine = N(2)-methylguanosine(1516) in 16S rRNA + S-adenosyl-L-homocysteine + H(+). Specifically methylates the guanosine in position 1516 of 16S rRNA. In Pseudomonas entomophila (strain L48), this protein is Ribosomal RNA small subunit methyltransferase J.